The sequence spans 500 residues: Putative beta-lactamase-like 1 (500 aa).

It belongs to the beta-lactamase family.

This Homo sapiens (Human) protein is Putative beta-lactamase-like 1 (LACTBL1).